The sequence spans 592 residues: Guanylate-binding protein 1 (592 aa).

A GTPase domain (Globular) region spans residues 1-311 (MASEIHMTGP…NAISSGDLPC (311 aa)). The 244-residue stretch at 35 to 278 (TQPMVVVAIV…FCSYIFSNSK (244 aa)) folds into the GB1/RHD3-type G domain. Residues 45–52 (GLYRTGKS), 67–69 (LGS), and 97–101 (DTEGL) each bind GTP. Ser-156 carries the post-translational modification Phosphoserine. Cys-589 carries the post-translational modification Cysteine methyl ester. Residue Cys-589 is the site of S-farnesyl cysteine attachment. A Phosphothreonine modification is found at Thr-590. The propeptide at 590-592 (TIS) is removed in mature form.

The protein belongs to the TRAFAC class dynamin-like GTPase superfamily. GB1/RHD3 GTPase family. GB1 subfamily. In terms of assembly, homodimer; homodimerization occurs upon GTP-binding and is required for the second hydrolysis step from GDP to GMP. Undergoes conformational changes and oligomerization upon GTP-binding and hydrolysis. Heterodimer with other family members, including GBP2, GBP3, GBP4 and GBP5. Dimerization regulates subcellular location to membranous structures. Interacts with SQSTM1. Interacts (when phosphorylated) with 14-3-3 protein sigma (SFN); leading to GBP1 retention in the cytosol and inactivation. Isoprenylation is required for proper subcellular location. In terms of processing, phosphorylated at Ser-156 by PIM1 in absence of infection, inhibits GBP1: phosphorylation promotes interaction with 14-3-3 protein sigma (SFN), leading to GBP1 retention in the cytosol. Dephosphorylated in response to infection, liberating GBP1.

It localises to the cytoplasmic vesicle membrane. The protein localises to the golgi apparatus membrane. The protein resides in the cell membrane. It is found in the cytoplasm. Its subcellular location is the cytosol. It localises to the secreted. The catalysed reaction is GTP + H2O = GDP + phosphate + H(+). It catalyses the reaction GDP + H2O = GMP + phosphate + H(+). In terms of biological role, interferon (IFN)-inducible GTPase that plays important roles in innate immunity against a diverse range of bacterial, viral and protozoan pathogens. Hydrolyzes GTP to GMP in two consecutive cleavage reactions: GTP is first hydrolyzed to GDP and then to GMP in a processive manner. Following infection, recruited to the pathogen-containing vacuoles or vacuole-escaped bacteria and promotes both inflammasome assembly and autophagy. Acts as a positive regulator of inflammasome assembly by facilitating the detection of inflammasome ligands from pathogens. Involved in the lysis of pathogen-containing vacuoles, releasing pathogens into the cytosol. Following pathogen release in the cytosol, forms a protein coat in a GTPase-dependent manner that encapsulates pathogens and promotes the detection of ligands by pattern recognition receptors. Plays a key role in inflammasome assembly in response to infection by Gram-negative bacteria: following pathogen release in the cytosol, forms a protein coat that encapsulates Gram-negative bacteria and directly binds to lipopolysaccharide (LPS), disrupting the O-antigen barrier and unmasking lipid A that is that detected by the non-canonical inflammasome effector CASP4/CASP11. Also promotes recruitment of proteins that mediate bacterial cytolysis, leading to release double-stranded DNA (dsDNA) that activates the AIM2 inflammasome. Involved in autophagy by regulating bacteriolytic peptide generation via its interaction with ubiquitin-binding protein SQSTM1, which delivers monoubiquitinated proteins to autolysosomes for the generation of bacteriolytic peptides. Confers protection to several pathogens, including the bacterial pathogens L.monocytogenes and M.bovis BCG as well as the protozoan pathogen T.gondii. Exhibits antiviral activity against influenza virus. This chain is Guanylate-binding protein 1 (GBP1), found in Pongo abelii (Sumatran orangutan).